We begin with the raw amino-acid sequence, 646 residues long: RNase E specificity factor CsrD (646 aa).

2 helical membrane-spanning segments follow: residues 10-30 (FVTL…SLSF) and 135-155 (MTTA…FLAV). The segment at 152-219 (FLAVRWLQRQ…REQHSRLDTL (68 aa)) is HAMP-like. Positions 194–224 (RTSSALDTLLREIQNAREQHSRLDTLIRSYA) form a coiled coil. The 134-residue stretch at 254 to 387 (THGIVMMIRL…GGNSWAIYDD (134 aa)) folds into the GGDEF domain. Residues 396–644 (NVRWRTLIEQ…TNVKKYSQRY (249 aa)) form the EAL domain.

It localises to the cell membrane. In terms of biological role, serves as a specificity factor required for RNase E-mediated decay of the small global regulatory RNAs CsrB and CsrC, it is probably not a nuclease. Nor does its activity involve c-di-GMP, despite its domain composition. Positively modulates motility gene expression, is also required for curli expression. This Escherichia coli (strain K12) protein is RNase E specificity factor CsrD (csrD).